Reading from the N-terminus, the 147-residue chain is Large ribosomal subunit protein uL13 (147 aa).

Residues 127–147 (GPEHPHSAQQPKVLEIQGAAR) form a disordered region.

This sequence belongs to the universal ribosomal protein uL13 family. As to quaternary structure, part of the 50S ribosomal subunit.

This protein is one of the early assembly proteins of the 50S ribosomal subunit, although it is not seen to bind rRNA by itself. It is important during the early stages of 50S assembly. The sequence is that of Large ribosomal subunit protein uL13 from Verminephrobacter eiseniae (strain EF01-2).